We begin with the raw amino-acid sequence, 114 residues long: Ribonuclease P protein component (114 aa).

This sequence belongs to the RnpA family. In terms of assembly, consists of a catalytic RNA component (M1 or rnpB) and a protein subunit.

It carries out the reaction Endonucleolytic cleavage of RNA, removing 5'-extranucleotides from tRNA precursor.. RNaseP catalyzes the removal of the 5'-leader sequence from pre-tRNA to produce the mature 5'-terminus. It can also cleave other RNA substrates such as 4.5S RNA. The protein component plays an auxiliary but essential role in vivo by binding to the 5'-leader sequence and broadening the substrate specificity of the ribozyme. This is Ribonuclease P protein component from Buchnera aphidicola subsp. Schizaphis graminum (strain Sg).